Consider the following 232-residue polypeptide: MAKLSKRQKLIREKVDSTRAYSVDEAVALLAELGQNVKFKESVDVAVNLGVDARKSDQVVRSSTVLPHGTGKTVRVAVFTQGANAEKATAAGADVVGMDDLADEVKKGNMDFDVVIATPDAMRVVGQLGQILGPRGLMPNPKVGTVTADVETAVKNAKAGQVRYRTDKNGIIHAPLGNVEFSAQNIKENLEALVADLKKAKPASSKGVYLKKITISSTMGPGLTIDQGTLSI.

Belongs to the universal ribosomal protein uL1 family. In terms of assembly, part of the 50S ribosomal subunit.

Its function is as follows. Binds directly to 23S rRNA. The L1 stalk is quite mobile in the ribosome, and is involved in E site tRNA release. In terms of biological role, protein L1 is also a translational repressor protein, it controls the translation of the L11 operon by binding to its mRNA. The polypeptide is Large ribosomal subunit protein uL1 (Marinobacter nauticus (strain ATCC 700491 / DSM 11845 / VT8) (Marinobacter aquaeolei)).